Consider the following 347-residue polypeptide: Fe(2+) transport protein 1 (347 aa).

The first 22 residues, 1-22 (MASNSALLMKTIFLVLIFVSFA), serve as a signal peptide directing secretion. Over 23–52 (ISPATSTAPEECGSESANPCVNKAKALPLK) the chain is Extracellular. Residues 53–73 (VIAIFVILIASMIGVGAPLFS) traverse the membrane as a helical segment. The Cytoplasmic portion of the chain corresponds to 74 to 84 (RNVSFLQPDGN). Residues 85–105 (IFTIIKCFASGIILGTGFMHV) traverse the membrane as a helical segment. The Extracellular segment spans residues 106 to 125 (LPDSFEMLSSICLEENPWHK). The chain crosses the membrane as a helical span at residues 126–146 (FPFSGFLAMLSGLITLAIDSM). Over 147–192 (ATSLYTSKNAVGIMPHGHGHGHGPANDVTLPIKEDDSSNAQLLRYR) the chain is Cytoplasmic. Glycyl lysine isopeptide (Lys-Gly) (interchain with G-Cter in ubiquitin) cross-links involve residues Lys154 and Lys179. The helical transmembrane segment at 193 to 213 (VIAMVLELGIIVHSVVIGLSL) threads the bilayer. The Extracellular portion of the chain corresponds to 214–224 (GATSDTCTIKG). The chain crosses the membrane as a helical span at residues 225–245 (LIAALCFHQMFEGMGLGGCIL). The Cytoplasmic portion of the chain corresponds to 246 to 254 (QAEYTNMKK). The helical transmembrane segment at 255-275 (FVMAFFFAVTTPFGIALGIAL) threads the bilayer. Topologically, residues 276–286 (STVYQDNSPKA) are extracellular. The chain crosses the membrane as a helical span at residues 287 to 307 (LITVGLLNACSAGLLIYMALV). Over 308–326 (DLLAAEFMGPKLQGSIKMQ) the chain is Cytoplasmic. A helical transmembrane segment spans residues 327–347 (FKCLIAALLGCGGMSIIAKWA).

Belongs to the ZIP transporter (TC 2.A.5) family. Interacts with FREE1. In terms of processing, monoubiquitinated on several Lys residues. Monoubiquitination controls trafficking from the plasma membrane and targeting to the vacuole. In terms of tissue distribution, expressed in the external cell layers of the root including the lateral branching zone. Also detected in flowers before pollination.

It is found in the cell membrane. It localises to the early endosome. Its subcellular location is the golgi apparatus. The protein resides in the trans-Golgi network. The protein localises to the vacuole. High-affinity iron transporter that plays a key role in the uptake of iron from the rhizosphere across the plasma membrane in the root epidermal layer. Acts as the principal regulator of iron homeostasis in planta. Also mediates the heavy metals uptake under iron-deficiency by its ability to transport cobalt, cadmium, manganese and/or zinc ions. In Arabidopsis thaliana (Mouse-ear cress), this protein is Fe(2+) transport protein 1 (IRT1).